Reading from the N-terminus, the 436-residue chain is Putative UDP-arabinose 4-epimerase 4 (436 aa).

Residues 1 to 20 are disordered; it reads MLNSSGVRTQRRSPRPLSLG. Residues 1–60 lie on the Cytoplasmic side of the membrane; the sequence is MLNSSGVRTQRRSPRPLSLGGRKIITPTKFAYDHHNPDKVLDFVEMDCLEPKTKNNLTGK. Residues 61–81 traverse the membrane as a helical; Signal-anchor for type II membrane protein segment; the sequence is LLLVASLLILAIIVISQSSSF. Topologically, residues 82–436 are lumenal; the sequence is TSPSAFSQRE…KIHPHGYNSY (355 aa). Position 96 to 127 (96 to 127) interacts with NAD(+); it reads HVLVTGGAGYIGSHAALRLLRDSYRVTIVDNL. The active-site Proton acceptor is tyrosine 244.

This sequence belongs to the NAD(P)-dependent epimerase/dehydratase family. The cofactor is NAD(+).

Its subcellular location is the golgi apparatus. It localises to the golgi stack membrane. The enzyme catalyses UDP-beta-L-arabinopyranose = UDP-alpha-D-xylose. Its pathway is nucleotide-sugar biosynthesis; UDP-L-arabinose biosynthesis; UDP-L-arabinose from UDP-alpha-D-xylose: step 1/1. The protein operates within cell wall biogenesis; cell wall polysaccharide biosynthesis. The polypeptide is Putative UDP-arabinose 4-epimerase 4 (Arabidopsis thaliana (Mouse-ear cress)).